A 157-amino-acid polypeptide reads, in one-letter code: S-ribosylhomocysteine lyase (157 aa).

Fe cation contacts are provided by H54, H58, and C126.

It belongs to the LuxS family. As to quaternary structure, homodimer. It depends on Fe cation as a cofactor.

The catalysed reaction is S-(5-deoxy-D-ribos-5-yl)-L-homocysteine = (S)-4,5-dihydroxypentane-2,3-dione + L-homocysteine. In terms of biological role, involved in the synthesis of autoinducer 2 (AI-2) which is secreted by bacteria and is used to communicate both the cell density and the metabolic potential of the environment. The regulation of gene expression in response to changes in cell density is called quorum sensing. Catalyzes the transformation of S-ribosylhomocysteine (RHC) to homocysteine (HC) and 4,5-dihydroxy-2,3-pentadione (DPD). The protein is S-ribosylhomocysteine lyase of Bacillus anthracis (strain A0248).